The primary structure comprises 776 residues: Probable E3 ubiquitin-protein ligase HECTD2 (776 aa).

The interval 1–46 is disordered; the sequence is MSEAVRVPSPATPLVVAAAAPEERKGKESEREKLPPIVSAGAGATA. Residues 7–20 show a composition bias toward low complexity; it reads VPSPATPLVVAAAA. Position 9 is a phosphoserine (Ser9). A compositionally biased stretch (basic and acidic residues) spans 21–34; that stretch reads PEERKGKESEREKL. One can recognise an HECT domain in the interval 437–776; it reads KRADLKKKLK…ISNSEGFGLE (340 aa). The Glycyl thioester intermediate role is filled by Cys744.

The catalysed reaction is S-ubiquitinyl-[E2 ubiquitin-conjugating enzyme]-L-cysteine + [acceptor protein]-L-lysine = [E2 ubiquitin-conjugating enzyme]-L-cysteine + N(6)-ubiquitinyl-[acceptor protein]-L-lysine.. It functions in the pathway protein modification; protein ubiquitination. Functionally, E3 ubiquitin-protein ligase which accepts ubiquitin from an E2 ubiquitin-conjugating enzyme in the form of a thioester and then directly transfers the ubiquitin to targeted substrates. This Pongo abelii (Sumatran orangutan) protein is Probable E3 ubiquitin-protein ligase HECTD2 (HECTD2).